The chain runs to 151 residues: UPF0178 protein Spea_2958 (151 aa).

It belongs to the UPF0178 family.

The chain is UPF0178 protein Spea_2958 from Shewanella pealeana (strain ATCC 700345 / ANG-SQ1).